Reading from the N-terminus, the 94-residue chain is Pyrimidine/purine nucleoside phosphorylase (94 aa).

The protein belongs to the nucleoside phosphorylase PpnP family.

It catalyses the reaction a purine D-ribonucleoside + phosphate = a purine nucleobase + alpha-D-ribose 1-phosphate. It carries out the reaction adenosine + phosphate = alpha-D-ribose 1-phosphate + adenine. The enzyme catalyses cytidine + phosphate = cytosine + alpha-D-ribose 1-phosphate. The catalysed reaction is guanosine + phosphate = alpha-D-ribose 1-phosphate + guanine. It catalyses the reaction inosine + phosphate = alpha-D-ribose 1-phosphate + hypoxanthine. It carries out the reaction thymidine + phosphate = 2-deoxy-alpha-D-ribose 1-phosphate + thymine. The enzyme catalyses uridine + phosphate = alpha-D-ribose 1-phosphate + uracil. The catalysed reaction is xanthosine + phosphate = alpha-D-ribose 1-phosphate + xanthine. Functionally, catalyzes the phosphorolysis of diverse nucleosides, yielding D-ribose 1-phosphate and the respective free bases. Can use uridine, adenosine, guanosine, cytidine, thymidine, inosine and xanthosine as substrates. Also catalyzes the reverse reactions. The protein is Pyrimidine/purine nucleoside phosphorylase of Vibrio parahaemolyticus serotype O3:K6 (strain RIMD 2210633).